The sequence spans 205 residues: CASP-like protein 3A1 (205 aa).

Residues 1–39 (MGIGMDSSTMSGPLVAHSGILDGDYEKRPAVCKMQMRFD) are Cytoplasmic-facing. The helical transmembrane segment at 40–60 (LANVGLRVLSLACSLVALVSM) threads the bilayer. The Extracellular segment spans residues 61 to 89 (ASNQESGVVTVFGFKLPVYSKWSYSDSFE). A helical transmembrane segment spans residues 90 to 110 (FLVGASAAAAAHSLLQLLLCG). Residues 111–125 (MKMVKRASTIPSRNH) lie on the Cytoplasmic side of the membrane. A helical membrane pass occupies residues 126 to 146 (AWLLFAGDQVFAYGMLAAASA). Residues 147-176 (AAGVTNLNRTGFRHSDLPNFCKPLHRFCDK) lie on the Extracellular side of the membrane. The N-linked (GlcNAc...) asparagine glycan is linked to asparagine 154. Residues 177–197 (AAISIVFAFISSLILGGSAVL) form a helical membrane-spanning segment. Over 198–205 (DVFWLSKN) the chain is Cytoplasmic.

Belongs to the Casparian strip membrane proteins (CASP) family. As to quaternary structure, homodimer and heterodimers.

The protein localises to the cell membrane. The chain is CASP-like protein 3A1 from Picea sitchensis (Sitka spruce).